Consider the following 2769-residue polypeptide: Teneurin-4 (2769 aa).

Residues 1–22 (MDVKERKPYRSLTRRRDAERRY) are compositionally biased toward basic and acidic residues. The interval 1–45 (MDVKERKPYRSLTRRRDAERRYTSSSADSEEGKAPQKSYSSSETL) is disordered. The Teneurin N-terminal domain maps to 1 to 341 (MDVKERKPYR…KPSKYCNWKC (341 aa)). Topologically, residues 1 to 345 (MDVKERKPYR…YCNWKCAALS (345 aa)) are cytoplasmic. At Ser124 the chain carries Phosphoserine. A disordered region spans residues 130-233 (RLWGRSTRSG…PPAGGAQEPA (104 aa)). Over residues 134–155 (RSTRSGRSSCLSSRANSNLTLT) the composition is skewed to low complexity. The segment covering 156–166 (DTEHENTETDH) has biased composition (basic and acidic residues). At Thr178 the chain carries Phosphothreonine. Residues 187–211 (HTPNQHHAASINSLNRGNFTPRSNP) show a composition bias toward polar residues. A helical transmembrane segment spans residues 346-366 (AIVISATLVILLAYFVAMHLF). The Extracellular segment spans residues 367–2769 (GLNWHLQPME…FMRQSEMGRR (2403 aa)). The tract at residues 400–426 (PSGGTGLETPDRKGKGTTEGKPSSFFP) is disordered. Residues 408–417 (TPDRKGKGTT) are compositionally biased toward basic and acidic residues. N-linked (GlcNAc...) asparagine glycosylation is present at Asn467. The segment at 507–526 (ARSLEGTPRQSRGTVPPSSH) is disordered. Positions 514–526 (PRQSRGTVPPSSH) are enriched in polar residues. 8 consecutive EGF-like domains span residues 562–593 (SVDN…PDCG), 594–624 (RASC…AECD), 626–658 (PTNQ…ESCE), 659–690 (EVDC…TNCE), 692–725 (PRAT…HDCS), 726–757 (IEIC…ACDQ), 758–787 (RACH…EHCT), and 788–831 (IAHY…AGCD). Intrachain disulfides connect Cys566–Cys576, Cys570–Cys581, Cys583–Cys592, Cys601–Cys612, Cys614–Cys623, Cys630–Cys641, Cys635–Cys646, Cys648–Cys657, Cys662–Cys673, Cys667–Cys678, Cys680–Cys689, Cys700–Cys713, Cys715–Cys724, Cys729–Cys739, Cys733–Cys744, Cys746–Cys755, Cys760–Cys770, Cys764–Cys775, Cys777–Cys786, Cys800–Cys810, Cys804–Cys819, and Cys821–Cys830. N-linked (GlcNAc...) asparagine glycans are attached at residues Asn940 and Asn1259. NHL repeat units follow at residues 1216 to 1259 (SCPS…PSGN), 1264 to 1308 (LELR…IKST), 1334 to 1378 (TRCG…NGII), 1393 to 1444 (LSCD…VAGR), and 1523 to 1566 (CFSG…IRKN). One copy of the YD 1 repeat lies at 1576–1595 (YELSSPIDQELYLFDTTGKH). N-linked (GlcNAc...) asparagine glycosylation occurs at Asn1609. YD repeat units lie at residues 1612–1632 (YTGD…VNVR), 1675–1694 (YHGN…WTTF), and 1695–1717 (YEYD…SSFR). Asn1705, Asn1741, Asn1799, and Asn1884 each carry an N-linked (GlcNAc...) asparagine glycan. YD repeat units lie at residues 1887–1906 (YSPG…ERME), 1928–1946 (YLEK…YIFE), 1947–1967 (FDKN…QTLE), 1974–1991 (YYRN…VIQD), 1992–2013 (FTED…VIYK), 2014–2031 (YGKL…TKVS), 2034–2054 (YDET…FTCT), 2057–2077 (YRQI…EGMV), 2085–2104 (YDNS…TPLP), 2110–2127 (YDDV…GVIY), 2128–2154 (YDIN…MKEV), 2156–2169 (YEIF…MTVQ), 2170–2193 (YDNM…TRYS), 2196–2216 (YDAD…WRYS), 2217–2237 (YDLN…LTPL), 2239–2259 (YDIR…DEDG), 2271–2291 (YNSA…SVRY), and 2293–2313 (YDGL…LQFF). Asn1985 carries an N-linked (GlcNAc...) asparagine glycan. A glycan (N-linked (GlcNAc...) asparagine) is linked at Asn2188. Asn2328 carries N-linked (GlcNAc...) asparagine glycosylation. Residues 2339-2380 (YDLQGHLFAMELSSGDEFYIACDNIGTPLAVFSGTGLMIKQI) form a YD 23 repeat. Residue Asn2646 is glycosylated (N-linked (GlcNAc...) asparagine).

Belongs to the tenascin family. Teneurin subfamily. Homodimer; disulfide-linked. May also form heterodimer with either TENM1 or TENM2 or TENM3.

The protein resides in the cell membrane. The protein localises to the cell projection. Its subcellular location is the nucleus. It localises to the cytoplasm. Its function is as follows. Involved in neural development, regulating the establishment of proper connectivity within the nervous system. Plays a role in the establishment of the anterior-posterior axis during gastrulation. Regulates the differentiation and cellular process formation of oligodendrocytes and myelination of small-diameter axons in the central nervous system (CNS). Promotes activation of focal adhesion kinase. May function as a cellular signal transducer. The protein is Teneurin-4 (TENM4) of Homo sapiens (Human).